A 260-amino-acid polypeptide reads, in one-letter code: Uroplakin-1b (260 aa).

At 2-15 (AKDDSTVRCFQGLL) the chain is on the cytoplasmic side. The chain crosses the membrane as a helical span at residues 16–36 (IFGNVIIGMCSIALMAECIFF). Topologically, residues 37–60 (VSDQNSLYPLLEATNNDDIYAAAW) are extracellular. A helical membrane pass occupies residues 61–81 (IGMFVGICLFCLSVLGIVGIM). Topologically, residues 82–86 (KSNRK) are cytoplasmic. Residues 87-107 (ILLVYFILMFIVYAFEVASCI) traverse the membrane as a helical segment. Over 108–229 (TAATQRDFFT…ELISGPMNRH (122 aa)) the chain is Extracellular. The helical transmembrane segment at 230 to 250 (AWGVAWFGFAILCWTFWVLLG) threads the bilayer. Topologically, residues 251-260 (TMFYWSRIDY) are cytoplasmic.

This sequence belongs to the tetraspanin (TM4SF) family. In terms of assembly, heterodimer with uroplakin-3A (UPK3A) or uroplakin-3B (UPK3B). N-glycosylated with high-mannose oligosaccharides. In terms of tissue distribution, bladder epithelium.

It localises to the membrane. Its function is as follows. Component of the asymmetric unit membrane (AUM); a highly specialized biomembrane elaborated by terminally differentiated urothelial cells. May play an important role in normal bladder epithelial physiology, possibly in regulating membrane permeability of superficial umbrella cells or in stabilizing the apical membrane through AUM/cytoskeletal interactions. The protein is Uroplakin-1b (UPK1B) of Bos taurus (Bovine).